A 500-amino-acid chain; its full sequence is Glutamyl-tRNA(Gln) amidotransferase subunit A (500 aa).

Catalysis depends on charge relay system residues K81 and S161. The Acyl-ester intermediate role is filled by S185.

It belongs to the amidase family. GatA subfamily. Heterotrimer of A, B and C subunits.

The catalysed reaction is L-glutamyl-tRNA(Gln) + L-glutamine + ATP + H2O = L-glutaminyl-tRNA(Gln) + L-glutamate + ADP + phosphate + H(+). Allows the formation of correctly charged Gln-tRNA(Gln) through the transamidation of misacylated Glu-tRNA(Gln) in organisms which lack glutaminyl-tRNA synthetase. The reaction takes place in the presence of glutamine and ATP through an activated gamma-phospho-Glu-tRNA(Gln). The protein is Glutamyl-tRNA(Gln) amidotransferase subunit A of Rhodospirillum rubrum (strain ATCC 11170 / ATH 1.1.1 / DSM 467 / LMG 4362 / NCIMB 8255 / S1).